A 215-amino-acid polypeptide reads, in one-letter code: Cytochrome b6 (215 aa).

Residues 32–52 (IFYCLGGITLTCFLIQFATGF) form a helical membrane-spanning segment. C35 is a binding site for heme c. Heme b contacts are provided by H86 and H100. Transmembrane regions (helical) follow at residues 90 to 110 (ASMM…TGGF), 116 to 136 (LTWV…VTGY), and 186 to 206 (AHTF…FLMI). Residues H187 and H202 each coordinate heme b.

It belongs to the cytochrome b family. PetB subfamily. The 4 large subunits of the cytochrome b6-f complex are cytochrome b6, subunit IV (17 kDa polypeptide, PetD), cytochrome f and the Rieske protein, while the 4 small subunits are PetG, PetL, PetM and PetN. The complex functions as a dimer. Heme b serves as cofactor. Heme c is required as a cofactor.

It localises to the cellular thylakoid membrane. Functionally, component of the cytochrome b6-f complex, which mediates electron transfer between photosystem II (PSII) and photosystem I (PSI), cyclic electron flow around PSI, and state transitions. The sequence is that of Cytochrome b6 from Desmonostoc sp. (strain PCC 7906) (Nostoc sp. (strain PCC 7906)).